A 154-amino-acid chain; its full sequence is uncharacterized protein (154 aa).

Residues arginine 7–aspartate 143 enclose the HTH marR-type domain. A DNA-binding region (H-T-H motif) is located at residues alanine 57 to lysine 80.

This is an uncharacterized protein from Bacillus subtilis (strain 168).